Reading from the N-terminus, the 1440-residue chain is Pentatricopeptide repeat-containing protein At3g18110, chloroplastic (1440 aa).

The N-terminal 44 residues, 1–44, are a transit peptide targeting the chloroplast; it reads MAVSAGALAFPALSVRATLNPEIKDEQANISSTTSSSQKFTYSR. Positions 63–72 are enriched in polar residues; the sequence is TPSQTLSSPV. Positions 63 to 84 are disordered; it reads TPSQTLSSPVSPIAGTPDSGDV. 25 PPR repeats span residues 224–258, 259–295, 296–330, 331–365, 366–400, 401–431, 437–471, 472–506, 507–541, 542–572, 608–638, 643–678, 680–714, 715–749, 751–785, 786–820, 821–855, 856–890, 891–925, 926–960, 961–995, 996–1030, 1031–1065, 1066–1100, and 1101–1135; these read RVQV…GCVP, DLIS…GLRP, DAIT…RCQP, DLWT…GFFP, DAVT…GFGK, DEMT…MKGL, DAIT…GIKP, TLQT…GTKP, DNLA…GHTP, SYTL…MEEL, ENDT…LKEH, KRLI…GWCF, SSTM…GCEA, SESV…GFHF, CSPM…GRTP, DLKT…GPSP, TVES…GFKI, SKSS…GYLP, TIRL…NFKV, ELAI…GLEP, DETT…GLDP, KLDT…GLKL, DRSF…GIEP, TLAT…EVEL, and TTLP…GLEP. The tract at residues 1419–1440 is disordered; sequence KKKKMGNETNGINTRRKFVRSK.

The protein belongs to the PPR family. P subfamily.

The protein resides in the plastid. Its subcellular location is the chloroplast. Functionally, may play a role in embryogenesis. In Arabidopsis thaliana (Mouse-ear cress), this protein is Pentatricopeptide repeat-containing protein At3g18110, chloroplastic (EMB1270).